The chain runs to 705 residues: Choline transporter-like protein 2 (705 aa).

Residues methionine 1–aspartate 31 are Cytoplasmic-facing. A Phosphothreonine modification is found at threonine 12. Residues valine 32–alanine 52 form a helical membrane-spanning segment. The Extracellular portion of the chain corresponds to tryptophan 53 to tryptophan 231. N-linked (GlcNAc...) asparagine glycans are attached at residues asparagine 186 and asparagine 199. A helical transmembrane segment spans residues tyrosine 232–leucine 252. At arginine 253 to leucine 255 the chain is on the cytoplasmic side. The helical transmembrane segment at alanine 256 to phenylalanine 276 threads the bilayer. Topologically, residues histidine 277–tryptophan 314 are extracellular. A helical transmembrane segment spans residues leucine 315–leucine 335. The Cytoplasmic segment spans residues arginine 336 to proline 363. The helical transmembrane segment at leucine 364–leucine 384 threads the bilayer. Topologically, residues serine 385–leucine 455 are extracellular. A glycan (N-linked (GlcNAc...) asparagine) is linked at asparagine 414. The chain crosses the membrane as a helical span at residues alanine 456–leucine 478. The Cytoplasmic portion of the chain corresponds to arginine 479–serine 503. The chain crosses the membrane as a helical span at residues leucine 504–leucine 524. Residues aspartate 525–tyrosine 562 lie on the Extracellular side of the membrane. A helical membrane pass occupies residues isoleucine 563–leucine 583. At methionine 584–aspartate 598 the chain is on the cytoplasmic side. The chain crosses the membrane as a helical span at residues phenylalanine 599–phenylalanine 619. Residues phenylalanine 620–tyrosine 637 are Extracellular-facing. The helical transmembrane segment at tryptophan 638–valine 658 threads the bilayer. Over tyrosine 659–serine 705 the chain is Cytoplasmic.

It belongs to the CTL (choline transporter-like) family. Interacts with COCH. Post-translationally, N-glycosylated; contains sialic acid. Not O-glycosylated. In terms of tissue distribution, expressed at high levels in lung, colon and in supporting cells of the inner ear (at protein level). Progressively lower levels in brain, tongue, liver and kidney (at protein level). In the tongue, strongly expressed in epithelial cells and in nerves within the musculature. Within the nerves, expression observed in the perineurial cells of the nerve sheath, in the Schwann cells and myelinated nerve fibers (at protein level). In the kidney, prominent expression in glomeruli in the lining of Bowman's capsule and on the mesangial cells adjacent to the vessels within the glomerulus (at protein level). Strongly expressed on the membranes of splenocytes (at protein level).

The protein resides in the cell membrane. It is found in the mitochondrion outer membrane. The catalysed reaction is choline(out) + n H(+)(in) = choline(in) + n H(+)(out). The enzyme catalyses ethanolamine(out) + n H(+)(in) = ethanolamine(in) + n H(+)(out). Functionally, choline/H+ antiporter, mainly in mitochodria. Also acts as a low-affinity ethanolamine/H+ antiporter, regulating the supply of extracellular ethanolamine (Etn) for the CDP-Etn pathway, redistribute intracellular Etn and balance the CDP-Cho and CDP-Etn arms of the Kennedy pathway. The polypeptide is Choline transporter-like protein 2 (SLC44A2) (Cavia porcellus (Guinea pig)).